The chain runs to 245 residues: tRNA1(Val) (adenine(37)-N6)-methyltransferase (245 aa).

It belongs to the methyltransferase superfamily. tRNA (adenine-N(6)-)-methyltransferase family.

It localises to the cytoplasm. It carries out the reaction adenosine(37) in tRNA1(Val) + S-adenosyl-L-methionine = N(6)-methyladenosine(37) in tRNA1(Val) + S-adenosyl-L-homocysteine + H(+). Its function is as follows. Specifically methylates the adenine in position 37 of tRNA(1)(Val) (anticodon cmo5UAC). The chain is tRNA1(Val) (adenine(37)-N6)-methyltransferase from Escherichia coli O7:K1 (strain IAI39 / ExPEC).